We begin with the raw amino-acid sequence, 161 residues long: Allophycocyanin alpha chain (161 aa).

N71 carries the N4-methylasparagine modification. C81 contacts (2R,3E)-phycocyanobilin.

Belongs to the phycobiliprotein family. As to quaternary structure, heterodimer of an alpha and a beta chain. Contains one covalently linked phycocyanobilin chromophore.

It is found in the plastid. It localises to the chloroplast thylakoid membrane. Light-harvesting photosynthetic bile pigment-protein from the phycobiliprotein complex. Allophycocyanin has a maximum absorption at approximately 650 nanometers. The sequence is that of Allophycocyanin alpha chain (apcA) from Pyropia haitanensis (Red seaweed).